The following is a 543-amino-acid chain: Aluminum-activated malate transporter 14 (543 aa).

Transmembrane regions (helical) follow at residues 56 to 76 (VGVS…FKGI), 80 to 100 (AIWA…ATLC), 106 to 126 (GLGT…ANDS), 129 to 149 (IFRA…ITYL), 164 to 184 (LIFL…DTVI), and 191 to 211 (FYTI…VFPI). Residues 416-438 (DTNEAASYQNTGTPRGERMSRFG) form a disordered region. The segment covering 419 to 428 (EAASYQNTGT) has biased composition (polar residues). Residues 445 to 472 (RLRADTLERRSAAATNERKILRQQLSRI) are a coiled coil.

It belongs to the aromatic acid exporter (TC 2.A.85) family.

It localises to the membrane. Malate transporter. The polypeptide is Aluminum-activated malate transporter 14 (ALMT14) (Arabidopsis thaliana (Mouse-ear cress)).